A 457-amino-acid polypeptide reads, in one-letter code: MTTNNKQRQTWSSRLTYVMTVAGATVGFGATWRFPYLVGENGGGAYVLLFCIAMIVIGIPMILVENVIGRRLRVNSIDAFGDKILDKGKGISKYWKILGYMGLLGAFGIMAYYMVLGGWVISYIISLISGTLDISTPITKDIAKNFYDLHIGNSPYEIIFYTLLFVIVNYIILAKGIIGGIERSVKYLMPLLFIFLIGMVIRNVTLPGAMEGITFYLKPDFSKITPQLFIFVLGQVFFALSLGFGVLITLSSYLNKEENLIHTAVITGFTNTIIAVLAGFMIFPSLFTFGIEPNAGPTLVFQSLPIVFSHLWAGKFFAIIFFGLLLIAALTTSITIYEVIITALQEKLRMCRGKAIVLTLSGIFLLGNIPAILGDNLWKNVTIFGKSIFDFYDYASGNILFMLTALGCAIFVGFVLKDEAKKELSSTKYSTFIKIWFNYVKFVVPLIILVIFISNLF.

A run of 12 helical transmembrane segments spans residues 18–38, 44–64, 101–121, 158–178, 188–208, 228–248, 273–293, 294–314, 316–336, 355–375, 396–416, and 433–453; these read VMTVAGATVGFGATWRFPYLV, GAYVLLFCIAMIVIGIPMILV, MGLLGAFGIMAYYMVLGGWVI, IIFYTLLFVIVNYIILAKGII, LMPLLFIFLIGMVIRNVTLPG, LFIFVLGQVFFALSLGFGVLI, IIAVLAGFMIFPSLFTFGIEP, NAGPTLVFQSLPIVFSHLWAG, FFAIIFFGLLLIAALTTSITI, AIVLTLSGIFLLGNIPAILGD, SGNILFMLTALGCAIFVGFVL, and IKIWFNYVKFVVPLIILVIFI.

It belongs to the sodium:neurotransmitter symporter (SNF) (TC 2.A.22) family.

The protein localises to the cell membrane. Its function is as follows. Putative sodium-dependent transporter. This is an uncharacterized protein from Haemophilus influenzae (strain ATCC 51907 / DSM 11121 / KW20 / Rd).